Here is a 437-residue protein sequence, read N- to C-terminus: GTPase Der (437 aa).

2 EngA-type G domains span residues 3–167 (NIVA…TKKV) and 176–352 (PAIA…DIRQ). Residues 9-16 (GRPNVGKS), 56-60 (DTGGW), 119-122 (NKAD), 182-189 (GKPNVGKS), 229-233 (DTAGI), and 294-297 (NKWD) each bind GTP. Residues 353 to 437 (IKIPTSQLNR…TPINIFMREK (85 aa)) form the KH-like domain.

It belongs to the TRAFAC class TrmE-Era-EngA-EngB-Septin-like GTPase superfamily. EngA (Der) GTPase family. As to quaternary structure, associates with the 50S ribosomal subunit.

GTPase that plays an essential role in the late steps of ribosome biogenesis. The protein is GTPase Der of Azobacteroides pseudotrichonymphae genomovar. CFP2.